The primary structure comprises 449 residues: Putative F-box/FBD/LRR-repeat protein At5g62970 (449 aa).

An F-box domain is found at 2-50 (DKISGFSDDELLVKILSFLPFKFAITTSVLSKQWKFLWMRVPKLEYDED). 6 LRR repeats span residues 27–52 (TTSVLSKQWKFLWMRVPKLEYDEDSM), 81–107 (GHRMRSFIEKNLPLHSSPVIESLRLKF), 158–185 (TLKLRNNILVDVPHVFSLPSLKILHLER), 186–211 (VTYGDGESLQRLLSNCSVLEDLVVEL), 252–279 (YFKLTDLSKTFSGLIENMPKLEEANITA), and 328–354 (IHNAYWSELLYWLLKASPKLQNLEFDE). An FBD domain is found at 368 to 418 (FWNQPNSVPQCLLSTLQTFEWSGYPGSVQGKDLATYILRKSRQLKIATISI).

This is Putative F-box/FBD/LRR-repeat protein At5g62970 from Arabidopsis thaliana (Mouse-ear cress).